Here is a 573-residue protein sequence, read N- to C-terminus: Myrcene synthase TPS5FN (573 aa).

5 residues coordinate (2E)-geranyl diphosphate: Arg286, Asp323, Asp327, Arg464, and Asp467. Mg(2+) contacts are provided by Asp323 and Asp327. The short motif at 323-327 is the DDXXD motif element; sequence DDIFD. Residues Asp467, Thr471, and Glu475 each contribute to the Mg(2+) site.

Belongs to the terpene synthase family. Tpsb subfamily. It depends on Mg(2+) as a cofactor. Requires Mn(2+) as cofactor. In terms of tissue distribution, expressed in glandular trichomes two to four weeks after flowering onset.

It catalyses the reaction (2E)-geranyl diphosphate = beta-myrcene + diphosphate. The catalysed reaction is (2E)-geranyl diphosphate = (1R,5R)-alpha-pinene + diphosphate. It carries out the reaction (2E)-geranyl diphosphate = sabinene + diphosphate. The enzyme catalyses (2E)-geranyl diphosphate = (4S)-limonene + diphosphate. It catalyses the reaction (2E)-geranyl diphosphate = terpinolene + diphosphate. The catalysed reaction is (2E)-geranyl diphosphate = camphene + diphosphate. It participates in secondary metabolite biosynthesis; terpenoid biosynthesis. In terms of biological role, involved in monoterpene (C10) olefins biosynthesis, constituants of cannabinoids and terpenoids-rich resins. Catalyzes mainly the conversion of (2E)-geranyl diphosphate to beta-myrcene, and also produces minor products such as alpha-pinene, camphene, sabinene, limonene and terpinolene. In Cannabis sativa (Hemp), this protein is Myrcene synthase TPS5FN.